Consider the following 248-residue polypeptide: Mannose-binding protein C (248 aa).

An N-terminal signal peptide occupies residues 1 to 20 (MSLIPSLSLLLMSMVAASYS). Residues 42–99 (GINGFPGKDGRDGTKGEKGEPGQGLRGLQGPPGKLGPPGNPGPSGSPGPKGQKGDPGN) form the Collagen-like domain. The disordered stretch occupies residues 43–110 (INGFPGKDGR…PDCDSSLAVS (68 aa)). Proline 47 bears the 4-hydroxyproline mark. The span at 49–61 (KDGRDGTKGEKGE) shows a compositional bias: basic and acidic residues. A 4-hydroxyproline mark is found at proline 73, proline 79, proline 82, and proline 88. Over residues 75–87 (KLGPPGNPGPSGS) the composition is skewed to pro residues. Residues 112–130 (RKALQTEMARIKKWLTFSL) are a coiled coil. The 112-residue stretch at 134 to 245 (VGNKFFLTNG…CSSSHLAVCE (112 aa)) folds into the C-type lectin domain. 2 disulfide bridges follow: cysteine 155-cysteine 244 and cysteine 222-cysteine 236.

In terms of assembly, oligomeric complex of 3 or more homotrimers. Interacts with MASP1 and MASP2. Interacts with MEP1A and MEP1B and may inhibit their catalytic activity. Hydroxylation on proline residues within the sequence motif, GXPG, is most likely to be 4-hydroxy as this fits the requirement for 4-hydroxylation in vertebrates.

The protein localises to the secreted. Its function is as follows. Calcium-dependent lectin involved in innate immune defense. Binds mannose, fucose and N-acetylglucosamine on different microorganisms and activates the lectin complement pathway. Binds to late apoptotic cells, as well as to apoptotic blebs and to necrotic cells, but not to early apoptotic cells, facilitating their uptake by macrophages. In Nomascus concolor (Black crested gibbon), this protein is Mannose-binding protein C (MBL2).